A 118-amino-acid chain; its full sequence is Large ribosomal subunit protein uL24 (118 aa).

This sequence belongs to the universal ribosomal protein uL24 family. In terms of assembly, part of the 50S ribosomal subunit.

In terms of biological role, one of two assembly initiator proteins, it binds directly to the 5'-end of the 23S rRNA, where it nucleates assembly of the 50S subunit. Its function is as follows. One of the proteins that surrounds the polypeptide exit tunnel on the outside of the subunit. This is Large ribosomal subunit protein uL24 from Prochlorococcus marinus (strain MIT 9313).